Here is a 100-residue protein sequence, read N- to C-terminus: ATP synthase subunit c (100 aa).

The next 2 membrane-spanning stretches (helical) occupy residues 27 to 47 (SVIA…IGMG) and 72 to 92 (FIAL…TLIV).

Belongs to the ATPase C chain family. F-type ATPases have 2 components, F(1) - the catalytic core - and F(0) - the membrane proton channel. F(1) has five subunits: alpha(3), beta(3), gamma(1), delta(1), epsilon(1). F(0) has three main subunits: a(1), b(2) and c(10-14). The alpha and beta chains form an alternating ring which encloses part of the gamma chain. F(1) is attached to F(0) by a central stalk formed by the gamma and epsilon chains, while a peripheral stalk is formed by the delta and b chains.

The protein resides in the cell inner membrane. Its function is as follows. F(1)F(0) ATP synthase produces ATP from ADP in the presence of a proton or sodium gradient. F-type ATPases consist of two structural domains, F(1) containing the extramembraneous catalytic core and F(0) containing the membrane proton channel, linked together by a central stalk and a peripheral stalk. During catalysis, ATP synthesis in the catalytic domain of F(1) is coupled via a rotary mechanism of the central stalk subunits to proton translocation. Functionally, key component of the F(0) channel; it plays a direct role in translocation across the membrane. A homomeric c-ring of between 10-14 subunits forms the central stalk rotor element with the F(1) delta and epsilon subunits. The chain is ATP synthase subunit c from Campylobacter concisus (strain 13826).